A 429-amino-acid polypeptide reads, in one-letter code: 3-phosphoshikimate 1-carboxyvinyltransferase (429 aa).

3-phosphoshikimate contacts are provided by Lys-23, Ser-24, and Arg-28. Phosphoenolpyruvate is bound at residue Lys-23. Gly-95 and Arg-123 together coordinate phosphoenolpyruvate. 3-phosphoshikimate is bound by residues Ser-168, Gln-170, Asp-316, and Lys-343. Residue Gln-170 participates in phosphoenolpyruvate binding. Asp-316 functions as the Proton acceptor in the catalytic mechanism. Phosphoenolpyruvate is bound by residues Arg-347 and Arg-389.

This sequence belongs to the EPSP synthase family. As to quaternary structure, monomer.

The protein resides in the cytoplasm. The catalysed reaction is 3-phosphoshikimate + phosphoenolpyruvate = 5-O-(1-carboxyvinyl)-3-phosphoshikimate + phosphate. It participates in metabolic intermediate biosynthesis; chorismate biosynthesis; chorismate from D-erythrose 4-phosphate and phosphoenolpyruvate: step 6/7. In terms of biological role, catalyzes the transfer of the enolpyruvyl moiety of phosphoenolpyruvate (PEP) to the 5-hydroxyl of shikimate-3-phosphate (S3P) to produce enolpyruvyl shikimate-3-phosphate and inorganic phosphate. In Bacillus cereus (strain 03BB102), this protein is 3-phosphoshikimate 1-carboxyvinyltransferase.